A 152-amino-acid chain; its full sequence is Siroheme decarboxylase NirD subunit (152 aa).

The protein belongs to the Ahb/Nir family. In terms of assembly, probably forms a complex composed of NirD, NirL, NirG and NirH. All proteins are required for the total conversion of siroheme to didecarboxysiroheme.

It carries out the reaction siroheme + 2 H(+) = 12,18-didecarboxysiroheme + 2 CO2. Its pathway is porphyrin-containing compound metabolism. Involved in heme d1 biosynthesis. Catalyzes the decarboxylation of siroheme into didecarboxysiroheme. The sequence is that of Siroheme decarboxylase NirD subunit from Stutzerimonas stutzeri (Pseudomonas stutzeri).